Reading from the N-terminus, the 419-residue chain is Tyrosine--tRNA ligase (419 aa).

Y34 provides a ligand contact to L-tyrosine. The 'HIGH' region signature appears at 39–48 (PSGDSMHIGH). Residues Y168 and Q172 each coordinate L-tyrosine. A 'KMSKS' region motif is present at residues 230 to 234 (KFGKS). Residue K233 participates in ATP binding. The 67-residue stretch at 352 to 418 (ANLVDWLVTL…GKKKYFLVSY (67 aa)) folds into the S4 RNA-binding domain.

Belongs to the class-I aminoacyl-tRNA synthetase family. TyrS type 1 subfamily. In terms of assembly, homodimer.

The protein localises to the cytoplasm. It catalyses the reaction tRNA(Tyr) + L-tyrosine + ATP = L-tyrosyl-tRNA(Tyr) + AMP + diphosphate + H(+). In terms of biological role, catalyzes the attachment of tyrosine to tRNA(Tyr) in a two-step reaction: tyrosine is first activated by ATP to form Tyr-AMP and then transferred to the acceptor end of tRNA(Tyr). This is Tyrosine--tRNA ligase from Listeria monocytogenes serotype 4b (strain CLIP80459).